The primary structure comprises 409 residues: LL-diaminopimelate aminotransferase (409 aa).

Positions 15 and 42 each coordinate substrate. Residues tyrosine 72, 108–109, tyrosine 132, asparagine 187, tyrosine 218, and 246–248 each bind pyridoxal 5'-phosphate; these read SK and SFS. Substrate contacts are provided by lysine 109, tyrosine 132, and asparagine 187. Lysine 249 is modified (N6-(pyridoxal phosphate)lysine). Arginine 257 and asparagine 292 together coordinate pyridoxal 5'-phosphate. The substrate site is built by asparagine 292 and arginine 388.

This sequence belongs to the class-I pyridoxal-phosphate-dependent aminotransferase family. LL-diaminopimelate aminotransferase subfamily. Homodimer. Requires pyridoxal 5'-phosphate as cofactor.

It catalyses the reaction (2S,6S)-2,6-diaminopimelate + 2-oxoglutarate = (S)-2,3,4,5-tetrahydrodipicolinate + L-glutamate + H2O + H(+). Its pathway is amino-acid biosynthesis; L-lysine biosynthesis via DAP pathway; LL-2,6-diaminopimelate from (S)-tetrahydrodipicolinate (aminotransferase route): step 1/1. Functionally, involved in the synthesis of meso-diaminopimelate (m-DAP or DL-DAP), required for both lysine and peptidoglycan biosynthesis. Catalyzes the direct conversion of tetrahydrodipicolinate to LL-diaminopimelate. This Acaryochloris marina (strain MBIC 11017) protein is LL-diaminopimelate aminotransferase.